We begin with the raw amino-acid sequence, 486 residues long: Membrane-bound lytic murein transglycosylase F (486 aa).

An N-terminal signal peptide occupies residues 1–21 (MTRIKLNYFVIGVVALLLALA). The segment at 22–268 (LWPNIPWRNG…RLEEKYLGHV (247 aa)) is non-LT domain. Residues 269–486 (GSFDYVDTKT…VVGPGWSINN (218 aa)) are LT domain. Glu-313 is a catalytic residue.

The protein in the N-terminal section; belongs to the bacterial solute-binding protein 3 family. It in the C-terminal section; belongs to the transglycosylase Slt family.

The protein resides in the cell outer membrane. It carries out the reaction Exolytic cleavage of the (1-&gt;4)-beta-glycosidic linkage between N-acetylmuramic acid (MurNAc) and N-acetylglucosamine (GlcNAc) residues in peptidoglycan, from either the reducing or the non-reducing ends of the peptidoglycan chains, with concomitant formation of a 1,6-anhydrobond in the MurNAc residue.. Its function is as follows. Murein-degrading enzyme that degrades murein glycan strands and insoluble, high-molecular weight murein sacculi, with the concomitant formation of a 1,6-anhydromuramoyl product. Lytic transglycosylases (LTs) play an integral role in the metabolism of the peptidoglycan (PG) sacculus. Their lytic action creates space within the PG sacculus to allow for its expansion as well as for the insertion of various structures such as secretion systems and flagella. In Yersinia enterocolitica serotype O:8 / biotype 1B (strain NCTC 13174 / 8081), this protein is Membrane-bound lytic murein transglycosylase F.